A 160-amino-acid polypeptide reads, in one-letter code: Large ribosomal subunit protein uL16 (160 aa).

It belongs to the universal ribosomal protein uL16 family. In terms of assembly, part of the 50S ribosomal subunit.

In terms of biological role, binds 23S rRNA and is also seen to make contacts with the A and possibly P site tRNAs. This Prochlorococcus marinus (strain MIT 9515) protein is Large ribosomal subunit protein uL16.